The sequence spans 238 residues: Fibroblast growth factor-binding protein 1 (238 aa).

The N-terminal stretch at 1–20 is a signal peptide; that stretch reads MRIHGLILLSFLLLAAQVLS. Positions 25-61 are disordered; sequence KTAKNVPDSTTEEDMSPSLGKARNKQRSRTSKSMTHG. 3 disulfides stabilise this stretch: Cys71-Cys88, Cys97-Cys130, and Cys106-Cys142. Ser164 carries O-linked (GalNAc...) serine glycosylation. Positions 197 to 238 are sufficient for interaction with FGF2 and FGF2-induced effects; the sequence is KDSECLEDPDVLTQRKTALEFCGESWSSFCTFFLNMLQATSC. Intrachain disulfides connect Cys201/Cys238 and Cys218/Cys226.

The protein belongs to the fibroblast growth factor-binding protein family. Found in a complex with FGFBP1, FGF1 and FGF2. Interacts with FGF1, FGF2, FGF7, FGF10, FGF22 and HSPG2. As to expression, expressed in gut, eye, thymus, skin, lung, tongue, Purkinje cells and cerebral chorioid plexus (at protein level).

The protein resides in the secreted. It localises to the extracellular space. The protein localises to the cell membrane. Acts as a carrier protein that release fibroblast-binding factors (FGFs) from the extracellular matrix (EM) storage and thus enhance the mitogenic activity of FGFs. Enhances FGF2 signaling during tissue repair, angiogenesis and in tumor growth. In Rattus norvegicus (Rat), this protein is Fibroblast growth factor-binding protein 1 (Fgfbp1).